Consider the following 553-residue polypeptide: Meiotic expression up-regulated protein 18 (553 aa).

The tract at residues 267–305 (SNETLCSNDSKHRIARLKNEDNTQKPISKKRKSKKASHK) is disordered. Residues 275-289 (DSKHRIARLKNEDNT) show a composition bias toward basic and acidic residues. The span at 293–304 (ISKKRKSKKASH) shows a compositional bias: basic residues.

This is Meiotic expression up-regulated protein 18 (meu18) from Schizosaccharomyces pombe (strain 972 / ATCC 24843) (Fission yeast).